The following is a 424-amino-acid chain: Probable threonylcarbamoyladenosine tRNA methylthiotransferase (424 aa).

Residues 4–115 form the MTTase N-terminal domain; the sequence is IRVYIETFGC…APQAVRAASN (112 aa). Residues cysteine 13, cysteine 48, cysteine 79, cysteine 150, cysteine 154, and cysteine 157 each contribute to the [4Fe-4S] cluster site. In terms of domain architecture, Radical SAM core spans 136-365; sequence RSNPLIHIIP…EELKMRITEE (230 aa). Residues 368–424 form the TRAM domain; the sequence is RRLVGSFQEILVVERGRKGGFIGRTGSYIPVVTETGEPGSFRRVRIRDATGTYLLAD.

It belongs to the methylthiotransferase family. CDKAL1 subfamily. Requires [4Fe-4S] cluster as cofactor.

The catalysed reaction is N(6)-L-threonylcarbamoyladenosine(37) in tRNA + (sulfur carrier)-SH + AH2 + 2 S-adenosyl-L-methionine = 2-methylsulfanyl-N(6)-L-threonylcarbamoyladenosine(37) in tRNA + (sulfur carrier)-H + 5'-deoxyadenosine + L-methionine + A + S-adenosyl-L-homocysteine + 2 H(+). In terms of biological role, catalyzes the methylthiolation of N6-threonylcarbamoyladenosine (t(6)A), leading to the formation of 2-methylthio-N6-threonylcarbamoyladenosine (ms(2)t(6)A) at position 37 in tRNAs that read codons beginning with adenine. In Methanothermobacter thermautotrophicus (strain ATCC 29096 / DSM 1053 / JCM 10044 / NBRC 100330 / Delta H) (Methanobacterium thermoautotrophicum), this protein is Probable threonylcarbamoyladenosine tRNA methylthiotransferase.